The primary structure comprises 366 residues: Probable quinol oxidase subunit 2 (366 aa).

Residues 1–19 (MSKFKSLLLLFGTLILLSG) form the signal peptide. C20 carries N-palmitoyl cysteine lipidation. A lipid anchor (S-diacylglycerol cysteine) is attached at C20. 2 helical membrane-spanning segments follow: residues 38-58 (FLIL…LGMF) and 80-100 (AIIE…LAIP). The disordered stretch occupies residues 330–366 (EPYNNEFKKDESKNAKEMKKISKDAQDQDNDDHGGGH). Basic and acidic residues predominate over residues 335-366 (EFKKDESKNAKEMKKISKDAQDQDNDDHGGGH).

Belongs to the cytochrome c oxidase subunit 2 family.

The protein localises to the cell membrane. It carries out the reaction 2 a quinol + O2 = 2 a quinone + 2 H2O. Its function is as follows. Catalyzes quinol oxidation with the concomitant reduction of oxygen to water. Subunit II transfers the electrons from a quinol to the binuclear center of the catalytic subunit I. The protein is Probable quinol oxidase subunit 2 (qoxA) of Staphylococcus aureus (strain USA300).